The primary structure comprises 258 residues: Putative ankyrin repeat domain-containing protein 30B-like (258 aa).

Positions 1–21 (MERLSAAPVKGQTGPERPSPF) are disordered. 4 ANK repeats span residues 71–100 (KKRT…QLDV), 104–133 (ENRT…DPNI), 137–166 (YGNT…DIEV), and 170–199 (AGHT…NANA). The disordered stretch occupies residues 216-258 (KISKNSQNSNPEGTSEGTPDEAAPLAERTPDTAESLVERTPDE). The segment covering 218 to 232 (SKNSQNSNPEGTSEG) has biased composition (polar residues). The segment covering 243 to 258 (RTPDTAESLVERTPDE) has biased composition (basic and acidic residues).

In Homo sapiens (Human), this protein is Putative ankyrin repeat domain-containing protein 30B-like (ANKRD30BL).